We begin with the raw amino-acid sequence, 123 residues long: Ribonuclease P protein component 1 (123 aa).

Residues 73 to 93 (PDNGVGTAFKPAGGETRQTTG) are disordered.

The protein belongs to the eukaryotic/archaeal RNase P protein component 1 family. Consists of a catalytic RNA component and at least 4-5 protein subunits.

Its subcellular location is the cytoplasm. The catalysed reaction is Endonucleolytic cleavage of RNA, removing 5'-extranucleotides from tRNA precursor.. Its function is as follows. Part of ribonuclease P, a protein complex that generates mature tRNA molecules by cleaving their 5'-ends. The sequence is that of Ribonuclease P protein component 1 from Halobacterium salinarum (strain ATCC 29341 / DSM 671 / R1).